The chain runs to 82 residues: Apovitellenin-1 (82 aa).

This sequence belongs to the apovitellenin family. Monomer. As to expression, found in egg yolk and in plasma.

Protein component of the very low density lipoprotein (VLDL) of egg-laying females. Potent lipoprotein lipase inhibitor, preventing the loss of triglycerides from VLDL on their way from the liver to the growing oocytes. The protein is Apovitellenin-1 of Meleagris gallopavo (Wild turkey).